Consider the following 314-residue polypeptide: Olfactory receptor 1Q1 (314 aa).

Topologically, residues 1 to 25 (MDNSNWTSVSHFVLLGISTHPEEQI) are extracellular. The N-linked (GlcNAc...) asparagine glycan is linked to asparagine 5. The helical transmembrane segment at 26–49 (PLFLVFSLMYAINISGNLAIITLI) threads the bilayer. Over 50 to 57 (LSAPRLHI) the chain is Cytoplasmic. A helical membrane pass occupies residues 58–79 (PMYIFLSNLALTDICFTSTTVP). At 80 to 100 (KMLQIIFSPTKVISYTGCLAQ) the chain is on the extracellular side. Cysteine 97 and cysteine 189 are disulfide-bonded. A helical membrane pass occupies residues 101-120 (TYFFICFAVMENFILAVMAY). Residues 121–139 (DRYIAICHPFHYTMILTRM) are Cytoplasmic-facing. A helical transmembrane segment spans residues 140–158 (LCVKMVVMCHALSHLHAML). At 159–195 (HTFLIGQLIFCADNRIPHFFCDLYALMKISCTSTYLN) the chain is on the extracellular side. A helical membrane pass occupies residues 196–219 (TLMIHTEGAVVISGALAFITASYA). Topologically, residues 220 to 236 (CIILVVLRIPSAKGRWK) are cytoplasmic. A helical transmembrane segment spans residues 237–259 (TFSTCGSHLTVVAIFYGTLSWVY). Topologically, residues 260-272 (FRPLSSYSVTKGR) are extracellular. A helical transmembrane segment spans residues 273-292 (IITVVYTVVTPMLNPFIYSL). The Cytoplasmic portion of the chain corresponds to 293-314 (RNGDVKGGFMKWMSRMQTFFFR).

Belongs to the G-protein coupled receptor 1 family.

Its subcellular location is the cell membrane. Functionally, odorant receptor. This Homo sapiens (Human) protein is Olfactory receptor 1Q1 (OR1Q1).